Reading from the N-terminus, the 96-residue chain is Redox-responsive transcriptional regulator WhiB3 (96 aa).

Residues 22-86 (LCRGVDSSMF…GGLSESEREL (65 aa)) form the 4Fe-4S Wbl-type domain. Residues cysteine 23, cysteine 53, cysteine 56, and cysteine 62 each contribute to the [4Fe-4S] cluster site.

This sequence belongs to the WhiB family. Requires [4Fe-4S] cluster as cofactor. The Fe-S cluster can be nitrosylated by nitric oxide (NO). Post-translationally, upon Fe-S cluster removal intramolecular disulfide bonds are formed.

Its subcellular location is the cytoplasm. In terms of biological role, a redox-sensitive transcriptional regulator. Maintains intracellular redox homeostasis by regulating catabolic metabolism and polyketide biosynthesis. Regulates expression of the redox buffer ergothioneine (ERG). In concert with myothiol (MSH), another redox buffer, responds to low pH leading to acid resistance. The apo- but not holo-form probably binds DNA. The protein is Redox-responsive transcriptional regulator WhiB3 (whiB3) of Mycolicibacterium smegmatis (strain ATCC 700084 / mc(2)155) (Mycobacterium smegmatis).